Reading from the N-terminus, the 2169-residue chain is Vitellogenin-A1 (2169 aa).

The first 46 residues, 1-46 (MATDGITSRFGFNERRRTHNRNSCRILEDKMLAKLLLLALAGLTAA), serve as a signal peptide directing secretion. 2 N-linked (GlcNAc...) asparagine glycosylation sites follow: Asn107 and Asn125. Residues 116 to 1008 (WMPNYEYVYN…SNDHRYPSGL (893 aa)) form the Vitellogenin domain. A sulfotyrosine mark is found at Tyr159 and Tyr163. Residues Asn360, Asn391, and Asn435 are each glycosylated (N-linked (GlcNAc...) asparagine). 2 disordered regions span residues 426-481 (DKKN…DKVE) and 514-570 (NDTS…SSSE). A compositionally biased stretch (low complexity) spans 438–461 (SSSSSSSSSSSSSSSESSSSSSES). A glycan (N-linked (GlcNAc...) asparagine) is linked at Asn514. The span at 517–531 (SSDSSSSDSSSSSSS) shows a compositional bias: low complexity. Asn538 carries an N-linked (GlcNAc...) asparagine glycan. Positions 541 to 570 (SSYSSSSSSSSSSSSSESSSYSSSSSSSSE) are enriched in low complexity. Residues Asn587, Asn763, and Asn781 are each glycosylated (N-linked (GlcNAc...) asparagine). Sulfotyrosine occurs at positions 1067, 1070, and 1074. N-linked (GlcNAc...) asparagine glycosylation is found at Asn1140, Asn1233, and Asn1336. Sulfotyrosine occurs at positions 1563, 1564, and 1570. 2 N-linked (GlcNAc...) asparagine glycosylation sites follow: Asn1652 and Asn1696. Sulfotyrosine is present on residues Tyr1737, Tyr1806, Tyr1809, Tyr1822, Tyr1824, and Tyr1888. The 210-residue stretch at 1770 to 1979 (PSCSFSNDYF…SYAITGQNCT (210 aa)) folds into the VWFD domain. 2 disulfides stabilise this stretch: Cys1772/Cys1942 and Cys1794/Cys1978. An N-linked (GlcNAc...) asparagine glycan is attached at Asn1977. Residues 2026–2063 (EESSSSSSSSSSDSSSSSSSSESSSRSRSGSSSSSSSS) are compositionally biased toward low complexity. Residues 2026 to 2081 (EESSSSSSSSSSDSSSSSSSSESSSRSRSGSSSSSSSSEEQKEFHPHKQEHSMKEC) form a disordered region. Residues 2064–2079 (EEQKEFHPHKQEHSMK) show a composition bias toward basic and acidic residues.

Glycosylated, phosphorylated and sulfated. The large subunit is sulfated more extensively than the small one. In terms of tissue distribution, produced by the fat body, where it is cleaved in the rough endoplasmic reticulum or cis-Golgi before being secreted into hemolymph. It is then sequestered by a single class of receptor mediated endocytosis in the ovary.

Precursor of the egg-yolk proteins that are sources of nutrients during embryonic development. May supply aromatic amino acids to the cuticle of rapidly developing embryos. The polypeptide is Vitellogenin-A1 (VGA1) (Aedes aegypti (Yellowfever mosquito)).